The sequence spans 146 residues: Hemoglobin subunit beta (146 aa).

Val1 carries the N-acetylvaline modification. Residues 2–146 (HLTGEEKAAV…VANALAHKYH (145 aa)) enclose the Globin domain. At Thr12 the chain carries Phosphothreonine. The residue at position 44 (Ser44) is a Phosphoserine. Lys59 is subject to N6-acetyllysine. His63 contributes to the heme b binding site. Position 82 is an N6-acetyllysine (Lys82). His92 contacts heme b. At Cys93 the chain carries S-nitrosocysteine. N6-acetyllysine is present on Lys144.

Belongs to the globin family. Heterotetramer of two alpha chains and two beta chains. In terms of tissue distribution, red blood cells.

Functionally, involved in oxygen transport from the lung to the various peripheral tissues. The polypeptide is Hemoglobin subunit beta (HBB) (Ailurus fulgens (Himalayan red panda)).